A 540-amino-acid polypeptide reads, in one-letter code: CUB domain-containing protein 2 (540 aa).

The first 24 residues, 1 to 24 (MLAELGACLLLAMVLLDSDPGTQA), serve as a signal peptide directing secretion. At 25–516 (MEGVKCGGVL…GTMVTQDTSD (492 aa)) the chain is on the extracellular side. 6 cysteine pairs are disulfide-bonded: C30–C56, C83–C106, C145–C171, C198–C218, C257–C283, and C314–C336. CUB domains are found at residues 30-143 (CGGV…YQKD), 145-255 (CGGV…YFSG), and 257-373 (CQEV…YIGV). An N-linked (GlcNAc...) asparagine glycan is attached at N40. An N-linked (GlcNAc...) asparagine glycan is attached at N267. N377, N435, and N436 each carry an N-linked (GlcNAc...) asparagine glycan. The helical transmembrane segment at 517–537 (IVFLGLCILAGVLMIIAIVVL) threads the bilayer. Topologically, residues 538–540 (MLL) are cytoplasmic.

It is found in the membrane. The chain is CUB domain-containing protein 2 (Cdcp2) from Mus musculus (Mouse).